We begin with the raw amino-acid sequence, 344 residues long: MQPRWVLLVALSVLFLSGRAGALTEGLYCGRQVCYDVLGVSRDANKGDIARAYRQLARKYHPDRYRPGDQLGPDGETRESAQEKFILVATAYETLKDEETRKDYDYMLDHPEEYYRHYYHYYSRRLAPKVDVRIVILVSVCAVSIFQYYSWWSSYNEAINYLATVTKYRIQAMEIAKQQGLLNRTKEKGKNRRSKEEIKSEEEEIIRDIIKNKIDIKGGYQKPQIFDILLFQIILFPYYMFKYISWYVRWIYTFNIQGKEYGEEEKLYLIRKYMKMSQSQFDTLEEHRKNTFLEQKLWIKENYEVYRQEQEEETKKKMASDPRWKRYRRWMKNEGPGRLTFADD.

The helical transmembrane segment at 5–25 (WVLLVALSVLFLSGRAGALTE) threads the bilayer. Positions 33–108 (VCYDVLGVSR…ETRKDYDYML (76 aa)) constitute a J domain. The next 2 membrane-spanning stretches (helical) occupy residues 134–154 (IVIL…WWSS) and 228–248 (ILLF…SWYV).

The protein belongs to the DNAJC25 family.

It localises to the membrane. This is DnaJ homolog subfamily C member 25 (dnajc25) from Xenopus laevis (African clawed frog).